Reading from the N-terminus, the 895-residue chain is MDGIGDGTESMGFDMPMLMNQQPHLFGSYGHDGSPVAPIFSNPTFQDEPSIGAADDNSDAKRRRIARACDMCRKKKIKCDGKMPKCSHCTNYKTDCVFTQVEKKRNPPKGAKYIEGLENRLGRMESLLRLSGLLSEDDGGKTDLGTLEKRLADRYHASGSNTPHNPQKINIPSQSQIAMSQQNSSSHYSTPRLESQSSPRTAATSPESQKESETEVEGLSDMMCSLVTNNCGETRYIGSSSGFSIFSPKGIQWVNEKTGDNSFQEMISSAYVDDNKWMYWKPEIFSDIFARRVFKPLPPKDEAMSLFKDFFDNFNCMFPLYHEPTFMHLVERQYSRDPYEGSGWWASINVVLAIAHRLRVMSNLVPQEEDRKAWLYLKNAMGVLTELTMRNTDLLSVQALLGMSLFLQGTPNPQPSFFLVAAAIRLSHSIGLHKRGSGFGLNPVEVEQRKRVFWIAYLLDKDICLRSGRPPVQDDDDMNVELPSDDPPDNIGNVPLSDGRSKFNLFRSMCRFATIESKVYKRLYSAKASKQSDGELLNTIGELDKELEDWKDSIPLDFRPEHEIKASHTPLILHVVVLHFAYYNCLTTIHRMSVHHGYWTSRLSNYAIQGLNARPLNPRVFLSAVLCVTAARASINLIKYIPQGDFACVWLILYYPVSALVTLFANILQNPSDARARSDVKLMNVVVNFLSTLVSDESNGSIKRMLGLCGEFERIAKVVLDKAEKESYSKKKRKSPEEPVNLQQSTPEEHPAPSPSTTQPTQAPSRNVPMSSPLFAENPGDPGGNTMADDAGGFASSREIPGTTGVSTNIPPNIQAMPGIAQDYQDMLSPDPLEGVSFADQPPYSATANTPLSSFQQPFVPQDLWQMPMTIEWDWADMSTNFPVFDTNGPPHGGL.

A DNA-binding region (zn(2)-C6 fungal-type) is located at residues 69–96 (CDMCRKKKIKCDGKMPKCSHCTNYKTDC). Positions 156–218 (HASGSNTPHN…QKESETEVEG (63 aa)) are disordered. Over residues 158–207 (SGSNTPHNPQKINIPSQSQIAMSQQNSSSHYSTPRLESQSSPRTAATSPE) the composition is skewed to polar residues. Residues 648–668 (CVWLILYYPVSALVTLFANIL) traverse the membrane as a helical segment. Positions 726 to 813 (ESYSKKKRKS…TGVSTNIPPN (88 aa)) are disordered. Low complexity predominate over residues 755 to 765 (PSTTQPTQAPS).

In terms of assembly, interacts with ncaA.

The protein localises to the nucleus. Its subcellular location is the membrane. Transcription factor that regulates expression of the genes related to ergosterol biosynthesis, including erg3B, erg24A, erg25A, as well as cyp51A that encodes a target protein of azoles. In coordination with ffmA and ncaA, is responsible for the expression of the ABC transporter abcC/cdr1B/abcG1 related to azole resistance. Directly binds both the cyp51A and abcC/cdr1B/abcG1 promoters at a conserved 34 bp region called the atrR response element (ATRE). AtrR also binds to the promoter regions of both the sterol response transcription factor srbA and atrR genes themselves, the latter suggesting the possibility that atrR is autoregulated. Also regulates iron uptake, most likely via cooperation with SrbA. AtrR is necessary for hypoxia adaptation and virulence. The chain is ABC-transporter-regulating transcription factor from Aspergillus fumigatus (strain ATCC MYA-4609 / CBS 101355 / FGSC A1100 / Af293) (Neosartorya fumigata).